Reading from the N-terminus, the 613-residue chain is Pescadillo homolog (613 aa).

Residues 259-344 (KELSNELETK…MKQIEHDIIX (86 aa)) adopt a coiled-coil conformation. Residues 268–333 (KESTEDNIIE…KNDQKNDQKN (66 aa)) are disordered. The segment covering 278–333 (ENEKKTKNGKTENCEKNDQENEKKTKNDKTKNCEKNDQKNDQKNDQKNDQKNDQKN) has biased composition (basic and acidic residues). In terms of domain architecture, BRCT spans 350–453 (SVKNLFKNHI…MILSCEDYNI (104 aa)). Positions 485–517 (LSEDPQYNKSIQKNKTNSENKXNNYNDNENDMS) are disordered. Residues 492-601 (NKSIQKNKTN…ENRQKLTIEK (110 aa)) adopt a coiled-coil conformation. Low complexity predominate over residues 497 to 511 (KNKTNSENKXNNYND).

It belongs to the pescadillo family.

It localises to the nucleus. Its subcellular location is the nucleolus. The protein resides in the nucleoplasm. Required for maturation of ribosomal RNAs and formation of the large ribosomal subunit. This is Pescadillo homolog from Plasmodium yoelii yoelii.